Reading from the N-terminus, the 210-residue chain is Uracil phosphoribosyltransferase (210 aa).

Residues Arg78, Arg103, and 130-138 (DPMLATGGT) each bind 5-phospho-alpha-D-ribose 1-diphosphate. Uracil-binding positions include Ile193 and 198–200 (GDA). Asp199 contributes to the 5-phospho-alpha-D-ribose 1-diphosphate binding site.

The protein belongs to the UPRTase family. Requires Mg(2+) as cofactor.

It catalyses the reaction UMP + diphosphate = 5-phospho-alpha-D-ribose 1-diphosphate + uracil. It participates in pyrimidine metabolism; UMP biosynthesis via salvage pathway; UMP from uracil: step 1/1. Allosterically activated by GTP. Its function is as follows. Catalyzes the conversion of uracil and 5-phospho-alpha-D-ribose 1-diphosphate (PRPP) to UMP and diphosphate. In Xanthomonas axonopodis pv. citri (strain 306), this protein is Uracil phosphoribosyltransferase.